Reading from the N-terminus, the 319-residue chain is Capsid protein (319 aa).

It is found in the virion. Its function is as follows. The capsid protein self-assembles to form an icosahedral capsid with a T=2 symmetry made of 120 subunits. The protein is Capsid protein of Cryptosporidium parvum virus 1 (strain KSU-1).